The following is a 450-amino-acid chain: Aspartyl/glutamyl-tRNA(Asn/Gln) amidotransferase subunit B (450 aa).

It belongs to the GatB/GatE family. GatB subfamily. Heterotrimer of A, B and C subunits.

The enzyme catalyses L-glutamyl-tRNA(Gln) + L-glutamine + ATP + H2O = L-glutaminyl-tRNA(Gln) + L-glutamate + ADP + phosphate + H(+). It catalyses the reaction L-aspartyl-tRNA(Asn) + L-glutamine + ATP + H2O = L-asparaginyl-tRNA(Asn) + L-glutamate + ADP + phosphate + 2 H(+). Its function is as follows. Allows the formation of correctly charged Asn-tRNA(Asn) or Gln-tRNA(Gln) through the transamidation of misacylated Asp-tRNA(Asn) or Glu-tRNA(Gln) in organisms which lack either or both of asparaginyl-tRNA or glutaminyl-tRNA synthetases. The reaction takes place in the presence of glutamine and ATP through an activated phospho-Asp-tRNA(Asn) or phospho-Glu-tRNA(Gln). The protein is Aspartyl/glutamyl-tRNA(Asn/Gln) amidotransferase subunit B of Methanobrevibacter smithii (strain ATCC 35061 / DSM 861 / OCM 144 / PS).